Reading from the N-terminus, the 514-residue chain is Bifunctional lysine-specific demethylase and histidyl-hydroxylase NO66 (514 aa).

The disordered stretch occupies residues 1–53 (MKRGLEEEIEEMSEEEVGVNNNNNGKKKKKKVVKKSKPVPLTKSVPQVSSQPL). Positions 7 to 17 (EEIEEMSEEEV) are enriched in acidic residues. Positions 25 to 37 (GKKKKKKVVKKSK) are enriched in basic residues. Polar residues predominate over residues 44-53 (SVPQVSSQPL). The region spanning 180–327 (CSVRLLNPQT…IGKVLNRALE (148 aa)) is the JmjC domain. Residues His-226, Asp-228, and His-291 each contribute to the Fe cation site.

It belongs to the ROX family. NO66 subfamily. Fe(2+) is required as a cofactor.

Its subcellular location is the nucleus. The enzyme catalyses N(6),N(6)-dimethyl-L-lysyl(36)-[histone H3] + 2 2-oxoglutarate + 2 O2 = L-lysyl(36)-[histone H3] + 2 formaldehyde + 2 succinate + 2 CO2. In terms of biological role, oxygenase that can act as both a histone lysine demethylase and a ribosomal histidine hydroxylase. Specifically demethylates 'Lys-4' (H3K4me) and 'Lys-36' (H3K36me) of histone H3, thereby playing a central role in histone code. The protein is Bifunctional lysine-specific demethylase and histidyl-hydroxylase NO66 (jcdg) of Dictyostelium discoideum (Social amoeba).